Consider the following 371-residue polypeptide: Flagellar P-ring protein (371 aa).

The N-terminal stretch at 1–25 is a signal peptide; it reads MKMRACKWLLTLAVAFAATLSSAYA.

It belongs to the FlgI family. In terms of assembly, the basal body constitutes a major portion of the flagellar organelle and consists of four rings (L,P,S, and M) mounted on a central rod.

Its subcellular location is the periplasm. The protein localises to the bacterial flagellum basal body. Functionally, assembles around the rod to form the L-ring and probably protects the motor/basal body from shearing forces during rotation. The chain is Flagellar P-ring protein from Sinorhizobium medicae (strain WSM419) (Ensifer medicae).